Here is a 303-residue protein sequence, read N- to C-terminus: Diaminopimelate epimerase (303 aa).

Asn-14 is a binding site for substrate. A compositionally biased stretch (low complexity) spans Pro-60–Arg-74. A disordered region spans residues Pro-60–Pro-86. Residues Pro-75 to Pro-86 show a composition bias toward pro residues. Residue Asn-97 coordinates substrate. Cys-106 acts as the Proton donor in catalysis. Substrate-binding positions include Gly-107–Asn-108, Asn-178, Asn-209, and Glu-227–Arg-228. Cys-236 functions as the Proton acceptor in the catalytic mechanism. Gly-237–Ser-238 provides a ligand contact to substrate.

Belongs to the diaminopimelate epimerase family. In terms of assembly, homodimer.

It is found in the cytoplasm. The enzyme catalyses (2S,6S)-2,6-diaminopimelate = meso-2,6-diaminopimelate. It participates in amino-acid biosynthesis; L-lysine biosynthesis via DAP pathway; DL-2,6-diaminopimelate from LL-2,6-diaminopimelate: step 1/1. In terms of biological role, catalyzes the stereoinversion of LL-2,6-diaminopimelate (L,L-DAP) to meso-diaminopimelate (meso-DAP), a precursor of L-lysine and an essential component of the bacterial peptidoglycan. The polypeptide is Diaminopimelate epimerase (Acidothermus cellulolyticus (strain ATCC 43068 / DSM 8971 / 11B)).